Reading from the N-terminus, the 474-residue chain is C6 finger domain transcription factor aclZ (474 aa).

A DNA-binding region (zn(2)-C6 fungal-type) is located at residues 42 to 69; that stretch reads CNQCHAAKVRCSGERTGCDRCNNLQYQC. Disordered stretches follow at residues 85-148 and 177-206; these read RGNK…SHSA and MSSDQDPSRSRGHSLQAPSHSGHSIADSHT. The segment covering 90-105 has biased composition (polar residues); it reads VRTTTEALQRPATAST. Residues 117–138 show a composition bias toward basic and acidic residues; it reads TDQRSENDPLSRSDFGEQDAAH.

The protein resides in the nucleus. In terms of biological role, transcription factor that specifically regulates the gene cluster that mediates the biosynthesis of aspirochlorine (or antibiotic A30641), an unusual halogenated spiro compound with distinctive antifungal properties due to selective inhibition of protein biosynthesis, and which is also active against bacteria, viruses, and murine tumor cells. This is C6 finger domain transcription factor aclZ from Aspergillus oryzae (strain ATCC 42149 / RIB 40) (Yellow koji mold).